A 607-amino-acid polypeptide reads, in one-letter code: Elongation factor 4 (607 aa).

The tr-type G domain maps to Ser11 to Thr193. GTP-binding positions include Asp23–Thr28 and Asn140–Asp143.

Belongs to the TRAFAC class translation factor GTPase superfamily. Classic translation factor GTPase family. LepA subfamily.

Its subcellular location is the cell membrane. It catalyses the reaction GTP + H2O = GDP + phosphate + H(+). Required for accurate and efficient protein synthesis under certain stress conditions. May act as a fidelity factor of the translation reaction, by catalyzing a one-codon backward translocation of tRNAs on improperly translocated ribosomes. Back-translocation proceeds from a post-translocation (POST) complex to a pre-translocation (PRE) complex, thus giving elongation factor G a second chance to translocate the tRNAs correctly. Binds to ribosomes in a GTP-dependent manner. The chain is Elongation factor 4 from Bacillus mycoides (strain KBAB4) (Bacillus weihenstephanensis).